Here is a 162-residue protein sequence, read N- to C-terminus: MRKIIGFRIGRRVSRWIFRKTRIQRSGYNRIHSTQQACMLMRPLAKLKSWGQRLKQSFRRRSTRRSAYIPVDHKKADPVPRGHLAIYVGQKDGDCHRVLVPIVYFNHPLFGELLREAEKEYGFCHEGGITIPCLYSDFERVKTRIASGSSSRVFPWGRHCRN.

It belongs to the ARG7 family. Expressed in embryo, endosperm, growing hypocotyls and shoot apical meristems.

In terms of biological role, acts a positive regulator of leaf senescence and may mediate auxin-induced leaf senescence. Plays a role in the regulation of seed germination by gibberellins and abscisic acid (ABA). Plays a role in the regulation of light-dependent hypocotyl elongation. The sequence is that of Auxin-responsive protein SAUR36 from Arabidopsis thaliana (Mouse-ear cress).